We begin with the raw amino-acid sequence, 443 residues long: MSETMTPSEIVSELDKHIIGQHKAKKAVAVALRNRWRRQQVGDPLRQEITPKNILMIGPTGVGKTEIARRLAKLADAPFIKIEATKFTEVGYVGRDVDTIVRDLAEMAVKQTRESEMKKVRAKAEDAAEDRILDVLIPPPRDIGFAQPEEKDSTARQTFRKKLREGQLDDKEIELEVSAGAPSMDIMGPPGMEDMTEQIRSMFAGLGQGKKNRRKMKVSEAFKLLIDEEAAKLVNEDELKQKAVANVEQNGIVFLDEIDKIASRSEYGGGEVSRQGVQRDLLPLVEGTTVNTKYGMIKTDHILFIASGAFHLSKPSDLIPELQGRFPIRVELDSLSVEDFRAILTQTDASLTKQYQALLKTEGVDLVFAEDGIRRLAEIACSVNEKVENIGARRLYTVMERLLEDLSFHAHKSSGETVTIDAAYVDERLSELSGNEDLSRYVL.

ATP contacts are provided by residues Ile19, 61–66 (GVGKTE), Asp256, Glu321, and Arg393.

The protein belongs to the ClpX chaperone family. HslU subfamily. In terms of assembly, a double ring-shaped homohexamer of HslV is capped on each side by a ring-shaped HslU homohexamer. The assembly of the HslU/HslV complex is dependent on binding of ATP.

It localises to the cytoplasm. ATPase subunit of a proteasome-like degradation complex; this subunit has chaperone activity. The binding of ATP and its subsequent hydrolysis by HslU are essential for unfolding of protein substrates subsequently hydrolyzed by HslV. HslU recognizes the N-terminal part of its protein substrates and unfolds these before they are guided to HslV for hydrolysis. The chain is ATP-dependent protease ATPase subunit HslU from Ralstonia pickettii (strain 12J).